The following is a 621-amino-acid chain: UvrABC system protein C (621 aa).

A GIY-YIG domain is found at 20 to 98; sequence TAPGVYRMYA…IKSLTPRYNV (79 aa). The UVR domain occupies 207–242; it reads DLLAEELIQAMQVASEHLEFEQAARLRDLLTSLRSM.

It belongs to the UvrC family. In terms of assembly, interacts with UvrB in an incision complex.

The protein localises to the cytoplasm. In terms of biological role, the UvrABC repair system catalyzes the recognition and processing of DNA lesions. UvrC both incises the 5' and 3' sides of the lesion. The N-terminal half is responsible for the 3' incision and the C-terminal half is responsible for the 5' incision. The polypeptide is UvrABC system protein C (Xylella fastidiosa (strain Temecula1 / ATCC 700964)).